Reading from the N-terminus, the 67-residue chain is Moricin (67 aa).

Positions Met-1–Ala-23 are cleaved as a signal peptide.

Belongs to the moricin family. Monomer.

Its subcellular location is the secreted. Functionally, antimicrobial peptide. Active against a broad spectrum of Gram-positive and Gram-negative bacteria including methicillin-resistant S.aureus ATCC 43 300, S.aureus BAA-39, pathogenic strains of L.monocytogenes, K.pneumoniae, E.coli O157:H7, S.typhimurium and multidrug-resistant S.typhimurium DT104 with minimum inhibitory concentration (MIC) of 1.4 uM for all except for S.aureus BAA-39. Also active against Serratia marcescens. Probably acts by disturbing membrane functions with its amphipathic alpha-helical structure. May protect a developing embryo from bacterial infection. This is Moricin from Manduca sexta (Tobacco hawkmoth).